A 660-amino-acid chain; its full sequence is UPF0603 protein MT2410 (660 aa).

The first 26 residues, 1-26, serve as a signal peptide directing secretion; sequence MRLVRLLGMVLTILAAGLLLGPPAGA. Residues 162 to 182 traverse the membrane as a helical segment; the sequence is VVLLVTVGIIVIVVAVLLVVM. Residues 488 to 567 adopt a coiled-coil conformation; sequence DQLTKVDADL…LEAAHDRKSS (80 aa). Residues 605 to 625 traverse the membrane as a helical segment; it reads GGNNAGAILGGIIIGDLLSGG. Residues 638–660 form a disordered region; the sequence is FGGSSNAPGSSPDGGFLGGGGRF.

It belongs to the UPF0603 family.

It localises to the cell membrane. Its function is as follows. May play a role in septum formation. This is UPF0603 protein MT2410 from Mycobacterium tuberculosis (strain CDC 1551 / Oshkosh).